The chain runs to 536 residues: Phosphoenolpyruvate carboxykinase (ATP) (536 aa).

R61, Y195, and K201 together coordinate substrate. ATP is bound by residues K201, H220, and 236–244 (GLSGTGKTT). 2 residues coordinate Mn(2+): K201 and H220. D257 contributes to the Mn(2+) binding site. ATP is bound by residues E285, R322, and T447. R322 serves as a coordination point for substrate.

It belongs to the phosphoenolpyruvate carboxykinase (ATP) family. It depends on Mn(2+) as a cofactor.

It is found in the cytoplasm. The catalysed reaction is oxaloacetate + ATP = phosphoenolpyruvate + ADP + CO2. The protein operates within carbohydrate biosynthesis; gluconeogenesis. Involved in the gluconeogenesis. Catalyzes the conversion of oxaloacetate (OAA) to phosphoenolpyruvate (PEP) through direct phosphoryl transfer between the nucleoside triphosphate and OAA. The polypeptide is Phosphoenolpyruvate carboxykinase (ATP) (Agrobacterium fabrum (strain C58 / ATCC 33970) (Agrobacterium tumefaciens (strain C58))).